Consider the following 169-residue polypeptide: Peptide methionine sulfoxide reductase MsrA (169 aa).

The active site involves C10.

Belongs to the MsrA Met sulfoxide reductase family.

The enzyme catalyses L-methionyl-[protein] + [thioredoxin]-disulfide + H2O = L-methionyl-(S)-S-oxide-[protein] + [thioredoxin]-dithiol. It catalyses the reaction [thioredoxin]-disulfide + L-methionine + H2O = L-methionine (S)-S-oxide + [thioredoxin]-dithiol. In terms of biological role, has an important function as a repair enzyme for proteins that have been inactivated by oxidation. Catalyzes the reversible oxidation-reduction of methionine sulfoxide in proteins to methionine. This chain is Peptide methionine sulfoxide reductase MsrA, found in Streptococcus equi subsp. equi (strain 4047).